A 53-amino-acid chain; its full sequence is Bowman-Birk type proteinase inhibitor 1 (53 aa).

5 cysteine pairs are disulfide-bonded: cysteine 9–cysteine 24, cysteine 12–cysteine 51, cysteine 14–cysteine 22, cysteine 31–cysteine 38, and cysteine 40–cysteine 48.

As to quaternary structure, dimer.

Its function is as follows. Inhibits trypsin (IC(50)=6.20 nM), neutrophil elastase (ELANE) and, to a lesser extent, alpha-chymotrypsin (IC(50)=3.44 uM). The chain is Bowman-Birk type proteinase inhibitor 1 from Lathyrus sativus (White vetchling).